Here is a 126-residue protein sequence, read N- to C-terminus: Large ribosomal subunit protein bL12 (126 aa).

This sequence belongs to the bacterial ribosomal protein bL12 family. As to quaternary structure, homodimer. Part of the ribosomal stalk of the 50S ribosomal subunit. Forms a multimeric L10(L12)X complex, where L10 forms an elongated spine to which 2 to 4 L12 dimers bind in a sequential fashion. Binds GTP-bound translation factors.

In terms of biological role, forms part of the ribosomal stalk which helps the ribosome interact with GTP-bound translation factors. Is thus essential for accurate translation. The protein is Large ribosomal subunit protein bL12 of Geotalea daltonii (strain DSM 22248 / JCM 15807 / FRC-32) (Geobacter daltonii).